The following is a 665-amino-acid chain: Ion-translocating oxidoreductase complex subunit C (665 aa).

2 4Fe-4S ferredoxin-type domains span residues 368–398 (EYAEPEAEQACIRCSSCSDACPVNLMPQQLY) and 408–437 (KSEEYALKDCIECGICAYVCPSHIPLIQYF). The [4Fe-4S] cluster site is built by C378, C381, C384, C388, C417, C420, C423, and C427. 2 stretches are compositionally biased toward basic and acidic residues: residues 465 to 477 (QARMEREEQERKA) and 485 to 513 (ARREELAQTKGEDPVKAALERLKAKKANE). Disordered regions lie at residues 465 to 568 (QARM…DAKK), 580 to 623 (AKKL…LDPK), and 637 to 665 (KKLAQANSTSEAISNSQTAENEVEKQIVR). 2 stretches are compositionally biased toward polar residues: residues 554–564 (VENQEQQTQPT) and 585–600 (QTNSTSEAISNSQTAE). A compositionally biased stretch (basic and acidic residues) spans 602–615 (EVEKTKSAVEKTEE). Residues 643–656 (NSTSEAISNSQTAE) show a composition bias toward polar residues.

The protein belongs to the 4Fe4S bacterial-type ferredoxin family. RnfC subfamily. As to quaternary structure, the complex is composed of six subunits: RnfA, RnfB, RnfC, RnfD, RnfE and RnfG. [4Fe-4S] cluster is required as a cofactor.

It is found in the cell inner membrane. Its function is as follows. Part of a membrane-bound complex that couples electron transfer with translocation of ions across the membrane. This Haemophilus influenzae (strain 86-028NP) protein is Ion-translocating oxidoreductase complex subunit C.